The sequence spans 412 residues: Poly-beta-1,6-N-acetyl-D-glucosamine synthase (412 aa).

4 helical membrane-spanning segments follow: residues 6–26, 298–318, 332–352, and 366–386; these read FLLF…IYFY, IISI…FITA, IFLL…TVAL, and LIFV…VVLV.

It belongs to the glycosyltransferase 2 family.

It localises to the cell membrane. Functionally, N-acetylglucosaminyltransferase that catalyzes the polymerization of single monomer units of UDP-N-acetylglucosamine to produce the linear homomer poly-beta-1,6-N-acetyl-D-glucosamine (PNAG, also referred to as PIA), a biofilm adhesin polysaccharide. Requires IcaD for full activity. This Staphylococcus aureus (strain NCTC 8325 / PS 47) protein is Poly-beta-1,6-N-acetyl-D-glucosamine synthase (icaA).